A 750-amino-acid polypeptide reads, in one-letter code: Putative tyrosine-protein kinase EpsB (750 aa).

Topologically, residues 1-31 (MTQNLPQPPAVNAPENELDLVRYLDVLVANR) are cytoplasmic. Residues 32–52 (WLIAGIAAAVMLLGAAYAFLA) form a helical membrane-spanning segment. At 53-444 (RPVYEADIMV…VPEEPVKPKK (392 aa)) the chain is on the periplasmic side. A helical transmembrane segment spans residues 445 to 465 (LTVTPLAGVLGVVLGVMAAFV). Residues 466 to 750 (RNALFGGITD…NSKPPEAESA (285 aa)) lie on the Cytoplasmic side of the membrane.

The protein belongs to the etk/wzc family.

The protein resides in the cell inner membrane. It catalyses the reaction L-tyrosyl-[protein] + ATP = O-phospho-L-tyrosyl-[protein] + ADP + H(+). Its function is as follows. Probably involved in polymerization and/or export of exopolysaccharide EPS I which functions as a virulence factor. May be involved in an ATP-dependent process in the pathway for EPS I production, possibly export of the trimeric repeat units across the inner membrane or their polymerization. In Ralstonia solanacearum (Pseudomonas solanacearum), this protein is Putative tyrosine-protein kinase EpsB (epsB).